Consider the following 364-residue polypeptide: GDSL esterase/lipase 7 (364 aa).

Residues 1–19 (MKSLLICLVLLELVWLGNG) form the signal peptide. Ser-37 (nucleophile) is an active-site residue. N-linked (GlcNAc...) asparagine glycans are attached at residues Asn-236, Asn-237, and Asn-264. Active-site residues include Asp-329 and His-332. N-linked (GlcNAc...) asparagine glycosylation occurs at Asn-351.

The protein belongs to the 'GDSL' lipolytic enzyme family.

It is found in the secreted. In Arabidopsis thaliana (Mouse-ear cress), this protein is GDSL esterase/lipase 7 (GLIP7).